Reading from the N-terminus, the 1765-residue chain is RANBP2-like and GRIP domain-containing protein 5/6 (1765 aa).

Residue Thr-19 is modified to Phosphothreonine. Position 21 is a phosphoserine (Ser-21). 3 TPR repeats span residues 26-59, 60-93, and 648-681; these read SMKGFYFAKLYYEAKEYDLAKKYICTYINVQERD, PKAHRFLGLLYELEENTEKAVECYRRSVELNPTQ, and EDAHITFAMLDAVNGNIEDAVTAFESIKSVVSYW. Disordered stretches follow at residues 760–804 and 924–945; these read GPLY…PRWT and FGISEPGNQEKKREKPLENDTG. Low complexity predominate over residues 778 to 797; the sequence is STPSPTKYSLSPSKSYKYSP. Residues 931–941 show a composition bias toward basic and acidic residues; it reads NQEKKREKPLE. One can recognise a RanBD1 1 domain in the interval 1036–1172; the sequence is HFEPVVQMPE…FEECQRLLLD (137 aa). Disordered stretches follow at residues 1214-1247 and 1306-1330; these read KVTEEENKGSGTGAAGASDTTIKPNAENTGPTLE and AKLNQSGTSVGTDEESVVTQEEERD. The span at 1235–1244 shows a compositional bias: polar residues; the sequence is IKPNAENTGP. Positions 1317-1329 are enriched in acidic residues; that stretch reads TDEESVVTQEEER. In terms of domain architecture, RanBD1 2 spans 1333–1469; the sequence is YFEPVVPLPD…FDEAKTAQEK (137 aa). Positions 1580 to 1593 are enriched in polar residues; sequence NNSETSSVAQSGSE. Positions 1580 to 1621 are disordered; the sequence is NNSETSSVAQSGSESKVEPKKCELSKNSDIEQSSDSKVKNLS. The segment covering 1594–1617 has biased composition (basic and acidic residues); it reads SKVEPKKCELSKNSDIEQSSDSKV. Residues 1702–1752 form the GRIP domain; sequence REKSAANLEYLKNVLLQFIFLKPGSERERLLPVINTMLQLSPEEKGKLAAV.

In terms of tissue distribution, expressed in testis.

It localises to the cytoplasm. The protein is RANBP2-like and GRIP domain-containing protein 5/6 (RGPD5) of Homo sapiens (Human).